A 429-amino-acid chain; its full sequence is Protein S-Myc (429 aa).

A Phosphotyrosine; by Tyr-kinases modification is found at Y36. The disordered stretch occupies residues 301–325; sequence PLPYAEDARPLKKPRSQDPLGPLKC. The 53-residue stretch at 346 to 398 folds into the bHLH domain; sequence ERRRNHNRMERQRRDIMRSSFLNLRDLVPELVHNEKAAKVVILKKATEYIHTL. Residues 398 to 419 are leucine-zipper; sequence LQTDESKLLVEREKLYERKQQL.

As to quaternary structure, efficient DNA binding requires dimerization with another bHLH protein.

It is found in the nucleus. Functionally, has apoptosis-inducing activity. The protein is Protein S-Myc (Mycs) of Rattus norvegicus (Rat).